Consider the following 431-residue polypeptide: Protein EARLY STARVATION 1, chloroplastic (431 aa).

A chloroplast-targeting transit peptide spans 1 to 19 (MAACSRGLVARPFDLTARG). Disordered regions lie at residues 65–126 (GNKP…DTGI) and 403–431 (GVYP…SPLE). Residues 415 to 431 (PAPPSDDPPGMPPSPLE) are compositionally biased toward pro residues.

It belongs to the ESV1 family.

It is found in the plastid. Its subcellular location is the chloroplast stroma. Its function is as follows. Binds preferentially to highly ordered alpha-glucans, such as starch and crystalline maltodextrins. Involved in the organization of the starch granule matrix, thus influencing starch turnover by modulating the accessibility of starch polymers to modifying and degrading enzymes. Required for the control of starch degradation in leaves and starch distribution in nonphotosynthetic parts. Promotes gravitropic responses, negative in shoots but positive in roots, by facilitating starch granules (statoliths) formation in hypocotyls and roots columella. Facilitates tight packing of starch granules in grains. In Oryza sativa subsp. japonica (Rice), this protein is Protein EARLY STARVATION 1, chloroplastic.